The chain runs to 302 residues: Putative F-box protein At1g32420 (302 aa).

Over residues 1–10 (MKRGNEENNH) the composition is skewed to basic and acidic residues. Positions 1-27 (MKRGNEENNHKTSSSSSTQRLSRRKIS) are disordered. Residues 31–78 (KSGNVNIPLDLTVEILKKLPAKSLLRFQCVSKQWLSIISSRRDFIDSI) enclose the F-box domain.

This is Putative F-box protein At1g32420 from Arabidopsis thaliana (Mouse-ear cress).